Here is a 371-residue protein sequence, read N- to C-terminus: Macronuclear solute carrier homolog CR-MSC (371 aa).

3 Solcar repeats span residues 16–111, 120–208, and 215–304; these read RMNY…FYDK, ARPD…CKEN, and PHWI…LSQF. The next 6 membrane-spanning stretches (helical) occupy residues 22-42, 89-109, 126-146, 184-204, 221-241, and 281-301; these read FAAA…LDMV, TFFF…GYFY, VAAG…IDIV, AGAN…IYDW, LWGT…FDMI, and FGSF…ICYL.

Belongs to the mitochondrial carrier (TC 2.A.29) family.

The protein localises to the membrane. The protein is Macronuclear solute carrier homolog CR-MSC of Oxytricha fallax.